Here is a 381-residue protein sequence, read N- to C-terminus: Alcohol dehydrogenase-like 6 (381 aa).

8 residues coordinate Zn(2+): C53, S55, H72, C102, C105, C108, C116, and C179. 2 residues coordinate an alcohol: S55 and H72. S55 contributes to the NAD(+) binding site. Residues 204 to 209 (GLGTVG), D228, K233, 297 to 299 (LGV), F324, and R374 each bind NAD(+).

Belongs to the zinc-containing alcohol dehydrogenase family. Class-III subfamily. As to quaternary structure, homodimer. Zn(2+) is required as a cofactor.

The protein localises to the cytoplasm. The catalysed reaction is a primary alcohol + NAD(+) = an aldehyde + NADH + H(+). It catalyses the reaction a secondary alcohol + NAD(+) = a ketone + NADH + H(+). The chain is Alcohol dehydrogenase-like 6 from Arabidopsis thaliana (Mouse-ear cress).